Reading from the N-terminus, the 332-residue chain is Probable electron transfer flavoprotein subunit alpha, mitochondrial (332 aa).

FAD is bound at residue 275 to 303 (LYIAIGISGAIQHLAGMKDSKVIVAINKD).

It belongs to the ETF alpha-subunit/FixB family. Heterodimer of an alpha and a beta subunit. FAD serves as cofactor.

The protein resides in the mitochondrion matrix. Functionally, the electron transfer flavoprotein serves as a specific electron acceptor for several dehydrogenases, including five acyl-CoA dehydrogenases, glutaryl-CoA and sarcosine dehydrogenase. It transfers the electrons to the main mitochondrial respiratory chain via ETF-ubiquinone oxidoreductase (ETF dehydrogenase). This Caenorhabditis elegans protein is Probable electron transfer flavoprotein subunit alpha, mitochondrial.